Consider the following 286-residue polypeptide: Phosphatidylserine decarboxylase proenzyme (286 aa).

Active-site charge relay system; for autoendoproteolytic cleavage activity residues include Asp-90, His-147, and Ser-250. Ser-250 acts as the Schiff-base intermediate with substrate; via pyruvic acid; for decarboxylase activity in catalysis. Position 250 is a pyruvic acid (Ser); by autocatalysis (Ser-250).

It belongs to the phosphatidylserine decarboxylase family. PSD-B subfamily. Prokaryotic type I sub-subfamily. Heterodimer of a large membrane-associated beta subunit and a small pyruvoyl-containing alpha subunit. The cofactor is pyruvate. Post-translationally, is synthesized initially as an inactive proenzyme. Formation of the active enzyme involves a self-maturation process in which the active site pyruvoyl group is generated from an internal serine residue via an autocatalytic post-translational modification. Two non-identical subunits are generated from the proenzyme in this reaction, and the pyruvate is formed at the N-terminus of the alpha chain, which is derived from the carboxyl end of the proenzyme. The autoendoproteolytic cleavage occurs by a canonical serine protease mechanism, in which the side chain hydroxyl group of the serine supplies its oxygen atom to form the C-terminus of the beta chain, while the remainder of the serine residue undergoes an oxidative deamination to produce ammonia and the pyruvoyl prosthetic group on the alpha chain. During this reaction, the Ser that is part of the protease active site of the proenzyme becomes the pyruvoyl prosthetic group, which constitutes an essential element of the active site of the mature decarboxylase.

Its subcellular location is the cell membrane. The enzyme catalyses a 1,2-diacyl-sn-glycero-3-phospho-L-serine + H(+) = a 1,2-diacyl-sn-glycero-3-phosphoethanolamine + CO2. Its pathway is phospholipid metabolism; phosphatidylethanolamine biosynthesis; phosphatidylethanolamine from CDP-diacylglycerol: step 2/2. Catalyzes the formation of phosphatidylethanolamine (PtdEtn) from phosphatidylserine (PtdSer). In Psychromonas ingrahamii (strain DSM 17664 / CCUG 51855 / 37), this protein is Phosphatidylserine decarboxylase proenzyme.